The following is a 398-amino-acid chain: Protochlorophyllide reductase, chloroplastic (398 aa).

Belongs to the short-chain dehydrogenases/reductases (SDR) family. POR subfamily.

The protein resides in the plastid. The protein localises to the chloroplast. The catalysed reaction is chlorophyllide a + NADP(+) = protochlorophyllide a + NADPH + H(+). It functions in the pathway porphyrin-containing compound metabolism; chlorophyll biosynthesis. Its function is as follows. Phototransformation of protochlorophyllide (Pchlide) to chlorophyllide (Chlide). This chain is Protochlorophyllide reductase, chloroplastic (POR1), found in Daucus carota (Wild carrot).